The primary structure comprises 204 residues: Fluoride-specific ion channel FluC 3 (204 aa).

The segment covering 1 to 16 (MRADESGPERESREPT) has biased composition (basic and acidic residues). The disordered stretch occupies residues 1-53 (MRADESGPERESREPTHIPGAEPELGGEPTPRGEPGPGFEPGPGGEPAPSRAP). Over residues 32 to 46 (RGEPGPGFEPGPGGE) the composition is skewed to pro residues. Helical transmembrane passes span 62–82 (VLAA…ALGL), 96–116 (FAVN…VLEI), 125–145 (PFAA…MVDT), and 158–178 (AFNV…GLAI). 2 residues coordinate Na(+): G133 and T136.

This sequence belongs to the fluoride channel Fluc/FEX (TC 1.A.43) family.

It is found in the cell membrane. The catalysed reaction is fluoride(in) = fluoride(out). With respect to regulation, na(+) is not transported, but it plays an essential structural role and its presence is essential for fluoride channel function. Its function is as follows. Fluoride-specific ion channel. Important for reducing fluoride concentration in the cell, thus reducing its toxicity. The chain is Fluoride-specific ion channel FluC 3 from Streptomyces avermitilis (strain ATCC 31267 / DSM 46492 / JCM 5070 / NBRC 14893 / NCIMB 12804 / NRRL 8165 / MA-4680).